A 303-amino-acid polypeptide reads, in one-letter code: Recombination-associated protein RdgC (303 aa).

Belongs to the RdgC family.

The protein localises to the cytoplasm. It localises to the nucleoid. In terms of biological role, may be involved in recombination. In Shewanella loihica (strain ATCC BAA-1088 / PV-4), this protein is Recombination-associated protein RdgC.